Reading from the N-terminus, the 1382-residue chain is MSSAGGSSGPGYVLNDFDAVPRLSYAKSIDIRDSLTDLIRIQRDSYDAFIGIDRDGSSGIQSIFEAMFPIRDLLGRAVLEFVGYNIGEPQYDEYECIKRGITFSVPIRITLRFVVWKVQEVSFKEVKYVVDEDTSERSVKYMKEQEVSIGDLPMMTSYGTFIINGIERVIVSQMHRSPGVFFDSDKGKTYSSGKLIYSARVIPYRGSWLDFEFDIKDIIYFRIDKKRKLPVSYLLKALGMSNNDILDAFYDKVIYTRCDKGWRVPFIVDRFKGVRLSYDLMDVDGSVLVKANTRITLRIAKKLYADGLREYMVPFSGITGMFVAADLVDPSSGAVIVSAGETITSEHIVKLELFDISEIAFLNIDFLTVGPYVLNTLFLDKNMTQEDALFEIYRVLRSGESPNLDAVKSFFKGLFFESERYDLSVVGRIKLNSHLGLDVDENTTVLTKEDIVQVVKKLVLLRDGEGVVDDIDHLGNRRVRSVGEFIENQFRIGILRLERMIMDYMSSVNFDNAMPCDFVNPKVLATVLKDFFSSSQLSQFMDQTNPLSEVTHKRRLSALGPGGLTRERAGFEVRDVHPTHYGRICPIETPEGQNIGLISSLAIYAKINKYGFIESPYRKVENRVVTDKVEYLLAMQEGDYYIADAGAAIDENNRFVDDMLYCRHGGNFVMVKSEDVDYVDVSPKQIVSVAASLIPFLENNDANRALMGSNMQRQAVPLLKSEAPLVGTGMEFVVAAGSGAVVLAKRDGIVHRVDGSYIVIRAFDANKDECLGVDIYRLRKFQRSNHNTCINQRPVVKLGDYVKANDVIADGSAIDRGELALGKNVLVAFMSWQGYNFEDSIVISSDVVKRDVFTSIHIEEFECVVRDTPLGPEKIMRSVPDVNEESLSHLDDVGIVNIGAEVSASSILVGKVTPRPPVSLPPETKLLVTIFGEKVFDCVDSSLYLPPDVEGTVIDVHVFVRRGVEENDRSLLIKQSEISSFVKERDYEIDVVSEYFHDELRKLLRNAGVKVKGYSDLDSFFAEASDDTLWSTGLADAKVAAKVKDMRERFDSIVGEAHRKFEQKVDKLNYGYDLPQGVLTIVKVFVAVKHNLQPGDKMAGRHGNKGVISRIVPAEDMPHLEDGTPVDIILNSLGVPSRMNIGQILETHLGWAAVNLGKKIGRILDKGGPSMIADLRDFLDKIYDGQKLKSDIASMSSEALLVFANRLRKGVPMAAPVFEGPKDAQISKLLELAEVDPSGQVYLYDGRLGKKFDRKITVGYIYMLKLHHLVDDKIHARSVGPYGLVTQQPLGGKSHFGGQRFGEMECWALQAYGAAYTLQEMLTVKSDDIVGRVKIYESIIKGDSNFECGIPESFNVMVKELRSLCLNVVLKQDKEFTSGEVE.

Belongs to the RNA polymerase beta chain family. In terms of assembly, the RNAP catalytic core consists of 2 alpha, 1 beta, 1 beta' and 1 omega subunit. When a sigma factor is associated with the core the holoenzyme is formed, which can initiate transcription.

The catalysed reaction is RNA(n) + a ribonucleoside 5'-triphosphate = RNA(n+1) + diphosphate. Its function is as follows. DNA-dependent RNA polymerase catalyzes the transcription of DNA into RNA using the four ribonucleoside triphosphates as substrates. The sequence is that of DNA-directed RNA polymerase subunit beta from Anaplasma marginale (strain Florida).